Reading from the N-terminus, the 475-residue chain is UDP-glycosyltransferase 84A4 (475 aa).

The active-site Proton acceptor is the H20. An anthocyanidin is bound at residue H20. Residues Q342, H357, W360, N361, S362, and E365 each coordinate UDP-alpha-D-glucose. G380 contributes to the an anthocyanidin binding site. 2 residues coordinate UDP-alpha-D-glucose: D381 and Q382.

Belongs to the UDP-glycosyltransferase family.

The catalysed reaction is (E)-4-coumarate + UDP-alpha-D-glucose = 4-O-(beta-D-glucosyl)-trans-4-coumarate + UDP + H(+). The enzyme catalyses (E)-ferulate + UDP-alpha-D-glucose = 1-O-[(E)-feruloyl]-beta-D-glucose + UDP. It carries out the reaction (E)-caffeate + UDP-alpha-D-glucose = 1-O-[(E)-caffeoyl]-beta-D-glucose + UDP. It catalyses the reaction (E)-sinapate + UDP-alpha-D-glucose = 1-O-(trans-sinapoyl)-beta-D-glucose + UDP. The catalysed reaction is (E)-cinnamate + UDP-alpha-D-glucose = 1-O-(trans-cinnamoyl)-beta-D-glucose + UDP. Functionally, UDP-glucosyltransferase that forms glucose esters with phenylpropanoids. Glucosylates 4-coumarate, ferulate, caffeate, sinapate and cinnamate. The polypeptide is UDP-glycosyltransferase 84A4 (Arabidopsis thaliana (Mouse-ear cress)).